Reading from the N-terminus, the 782-residue chain is Fibrinogen alpha chain (782 aa).

A signal peptide spans 1–19 (MLSLRVACLILSLASTVWT). The stretch at 68 to 547 (GCRMKGLIDE…KRGRARTMRD (480 aa)) forms a coiled coil. Over residues 264 to 283 (RPGKDGASRGDLPGDSRGDS) the composition is skewed to basic and acidic residues. The disordered stretch occupies residues 264–374 (RPGKDGASRG…PATRKEYHTG (111 aa)). Ser279 bears the Phosphoserine mark. Positions 311-323 (SGSGSDGNWGSGT) are enriched in gly residues. Low complexity-rich tracts occupy residues 324-344 (TGSDDTGTWGAGSSRPSSGSG) and 354-364 (GEFSEFGGSSS). Phosphoserine is present on Ser326. Residues Cys404 and Cys434 are joined by a disulfide bond. Ser470 bears the Phosphoserine mark. The residue at position 499 (Pro499) is a 4-hydroxyproline; by P4HA1. Positions 522–536 (DEAASEAHQEGDTRT) are enriched in basic and acidic residues. The interval 522–542 (DEAASEAHQEGDTRTTKRGRA) is disordered. Ser526 bears the Phosphoserine mark. Positions 539 to 780 (RGRARTMRDC…AVRMKIRPLV (242 aa)) constitute a Fibrinogen C-terminal domain. The N-linked (GlcNAc...) asparagine glycan is linked to Asn602. Residues Asp707, Asp709, Trp711, and Glu713 each contribute to the Ca(2+) site. A disulfide bridge connects residues Cys715 and Cys728.

In terms of assembly, heterohexamer; disulfide linked. Contains 2 sets of 3 non-identical chains (alpha, beta and gamma). The 2 heterotrimers are in head to head conformation with the N-termini in a small central domain. Conversion of fibrinogen to fibrin is triggered by thrombin, which cleaves fibrinopeptides A and B from alpha and beta chains, and thus exposes the N-terminal polymerization sites responsible for the formation of the soft clot. The soft clot is converted into the hard clot by factor XIIIA which catalyzes the epsilon-(gamma-glutamyl)lysine cross-linking between gamma chains (stronger) and between alpha chains (weaker) of different monomers. In terms of processing, forms F13A-mediated cross-links between a glutamine and the epsilon-amino group of a lysine residue, forming fibronectin-fibrinogen heteropolymers. Post-translationally, phosphorylated by FAM20C in the extracellular medium.

It localises to the secreted. In terms of biological role, cleaved by the protease thrombin to yield monomers which, together with fibrinogen beta (FGB) and fibrinogen gamma (FGG), polymerize to form an insoluble fibrin matrix. Fibrin has a major function in hemostasis as one of the primary components of blood clots. In addition, functions during the early stages of wound repair to stabilize the lesion and guide cell migration during re-epithelialization. Was originally thought to be essential for platelet aggregation, based on in vitro studies using anticoagulated blood. However, subsequent studies have shown that it is not absolutely required for thrombus formation in vivo. Enhances expression of SELP in activated platelets via an ITGB3-dependent pathway. Maternal fibrinogen is essential for successful pregnancy. Fibrin deposition is also associated with infection, where it protects against IFNG-mediated hemorrhage. May also facilitate the immune response via both innate and T-cell mediated pathways. This is Fibrinogen alpha chain (Fga) from Rattus norvegicus (Rat).